The following is a 306-amino-acid chain: Aspartate carbamoyltransferase catalytic subunit (306 aa).

Carbamoyl phosphate contacts are provided by Arg-55 and Thr-56. Lys-84 contributes to the L-aspartate binding site. The carbamoyl phosphate site is built by Arg-105, His-133, and Gln-136. 2 residues coordinate L-aspartate: Arg-166 and Arg-227. Carbamoyl phosphate-binding residues include Leu-265 and Pro-266.

Belongs to the aspartate/ornithine carbamoyltransferase superfamily. ATCase family. Heterododecamer (2C3:3R2) of six catalytic PyrB chains organized as two trimers (C3), and six regulatory PyrI chains organized as three dimers (R2).

It catalyses the reaction carbamoyl phosphate + L-aspartate = N-carbamoyl-L-aspartate + phosphate + H(+). Its pathway is pyrimidine metabolism; UMP biosynthesis via de novo pathway; (S)-dihydroorotate from bicarbonate: step 2/3. Catalyzes the condensation of carbamoyl phosphate and aspartate to form carbamoyl aspartate and inorganic phosphate, the committed step in the de novo pyrimidine nucleotide biosynthesis pathway. The protein is Aspartate carbamoyltransferase catalytic subunit of Neisseria meningitidis serogroup A / serotype 4A (strain DSM 15465 / Z2491).